Consider the following 384-residue polypeptide: 5-cytosine rRNA methyltransferase NSUN4 (384 aa).

A mitochondrion-targeting transit peptide spans 1–25 (MAALTLRGVRELLKRVDLATVPRRH). Residues Gly-185, Gly-186, Lys-187, and Asp-204 each coordinate S-adenosyl-L-methionine. Ser-206 is subject to Phosphoserine. Residues Arg-209, Asp-237, Gly-238, and Asp-255 each contribute to the S-adenosyl-L-methionine site. The Nucleophile role is filled by Cys-310.

It belongs to the class I-like SAM-binding methyltransferase superfamily. RsmB/NOP family. In terms of assembly, heterodimer with MTERFD2/MTERF4; this interaction seems to be required for NSUN4 recruitment to the mitochondrial large ribosomal subunit.

The protein resides in the mitochondrion. It catalyses the reaction a cytidine in rRNA + S-adenosyl-L-methionine = a 5-methylcytidine in rRNA + S-adenosyl-L-homocysteine + H(+). The catalysed reaction is a cytidine in mRNA + S-adenosyl-L-methionine = a 5-methylcytidine in mRNA + S-adenosyl-L-homocysteine + H(+). In terms of biological role, mitochondrial RNA cytosine C(5)-methyltransferase that methylates cytosine to 5-methylcytosine (m5C) in various RNAs, such as rRNAs, mRNAs and some long non-coding RNAs (lncRNAs). Involved in mitochondrial ribosome small subunit (SSU) maturation by catalyzing methylation of mitochondrial 12S rRNA; the function is independent of MTERFD2/MTERF4 and assembled mitochondrial ribosome large subunit (LSU). Targeted to LSU by MTERFD2/MTERF4 and probably is involved in a final step in ribosome biogenesis to ensure that SSU and LSU are assembled. In vitro can methylate 16S rRNA of the LSU; the methylation is enhanced by MTERFD/MTERF4. Also acts as a regulator of innate immunity by marking double-stranded mitochondrial RNAs(mt-dsRNAs) generated in response to stress: catalyzes m5C modification on mitochondrial RNAs, such as a mRNAs and lncRNAs, with a preference for the termini of light-strand lncRNAs, promoting their degradation and cytosolic release. Modified light-strand lncRNAs are then recognized by C1QBP reader and recruited to the mitochondrial degradosome complex, which promotes their degradation. The chain is 5-cytosine rRNA methyltransferase NSUN4 from Homo sapiens (Human).